We begin with the raw amino-acid sequence, 428 residues long: C4-dicarboxylate transport protein (428 aa).

9 helical membrane passes run 8–28 (SLYF…HFYP), 44–64 (LIKM…IAGM), 76–96 (VALL…LVIV), 142–162 (IGAF…LFGF), 184–204 (VIFG…FGAM), 222–242 (LIVC…GSIA), 289–309 (VVGL…SIYL), 326–346 (IFHQ…AAGV), and 352–372 (IVLA…LALI).

This sequence belongs to the dicarboxylate/amino acid:cation symporter (DAACS) (TC 2.A.23) family.

Its subcellular location is the cell inner membrane. Its function is as follows. Responsible for the transport of dicarboxylates such as succinate, fumarate, and malate from the periplasm across the membrane. The protein is C4-dicarboxylate transport protein of Cronobacter sakazakii (strain ATCC BAA-894) (Enterobacter sakazakii).